A 42-amino-acid chain; its full sequence is Protein YkgS (42 aa).

In Escherichia coli (strain K12), this protein is Protein YkgS (ykgS).